A 333-amino-acid polypeptide reads, in one-letter code: B3 domain-containing protein At1g32030 (333 aa).

Polar residues-rich tracts occupy residues 76-99 (VTVR…SLLD) and 134-143 (PQNASSSSTL). Residues 76–179 (VTVRNPEQNQ…SEPKKAKTPY (104 aa)) are disordered. Residues 220–328 (QSRLLMPFNT…ILSFALVLPP (109 aa)) constitute a DNA-binding region (TF-B3).

The protein resides in the nucleus. This chain is B3 domain-containing protein At1g32030, found in Arabidopsis thaliana (Mouse-ear cress).